Consider the following 382-residue polypeptide: Acetylornithine deacetylase (382 aa).

Zn(2+) is bound at residue His79. Residue Asp81 is part of the active site. Residue Asp111 participates in Zn(2+) binding. Residue Glu143 is part of the active site. Zn(2+) contacts are provided by Glu144, Glu168, and His354.

This sequence belongs to the peptidase M20A family. ArgE subfamily. As to quaternary structure, homodimer. Zn(2+) is required as a cofactor. The cofactor is Co(2+). Glutathione serves as cofactor.

The protein resides in the cytoplasm. It carries out the reaction N(2)-acetyl-L-ornithine + H2O = L-ornithine + acetate. The protein operates within amino-acid biosynthesis; L-arginine biosynthesis; L-ornithine from N(2)-acetyl-L-ornithine (linear): step 1/1. In terms of biological role, catalyzes the hydrolysis of the amide bond of N(2)-acetylated L-amino acids. Cleaves the acetyl group from N-acetyl-L-ornithine to form L-ornithine, an intermediate in L-arginine biosynthesis pathway, and a branchpoint in the synthesis of polyamines. In Pasteurella multocida (strain Pm70), this protein is Acetylornithine deacetylase.